Here is a 660-residue protein sequence, read N- to C-terminus: Bifunctional polymyxin resistance protein ArnA (660 aa).

Positions 1–304 (MKAVIFAYHD…TLGLVAGARL (304 aa)) are formyltransferase ArnAFT. Catalysis depends on His104, which acts as the Proton donor; for formyltransferase activity. Residues Arg114 and 136–140 (VKRAD) contribute to the (6R)-10-formyltetrahydrofolate site. Positions 314 to 660 (RRIRVLILGV…RSVDVAERAS (347 aa)) are dehydrogenase ArnADH. Residues Asp347 and 368 to 369 (DI) contribute to the NAD(+) site. UDP-alpha-D-glucuronate-binding positions include Ala393, Tyr398, and 432-433 (TS). Glu434 functions as the Proton acceptor; for decarboxylase activity in the catalytic mechanism. Residues Arg460, Asn492, 526–535 (KLIDGGQQKR), and Tyr613 each bind UDP-alpha-D-glucuronate. The Proton donor; for decarboxylase activity role is filled by Arg619.

This sequence in the N-terminal section; belongs to the Fmt family. UDP-L-Ara4N formyltransferase subfamily. In the C-terminal section; belongs to the NAD(P)-dependent epimerase/dehydratase family. UDP-glucuronic acid decarboxylase subfamily. As to quaternary structure, homohexamer, formed by a dimer of trimers.

The catalysed reaction is UDP-alpha-D-glucuronate + NAD(+) = UDP-beta-L-threo-pentopyranos-4-ulose + CO2 + NADH. The enzyme catalyses UDP-4-amino-4-deoxy-beta-L-arabinose + (6R)-10-formyltetrahydrofolate = UDP-4-deoxy-4-formamido-beta-L-arabinose + (6S)-5,6,7,8-tetrahydrofolate + H(+). It functions in the pathway nucleotide-sugar biosynthesis; UDP-4-deoxy-4-formamido-beta-L-arabinose biosynthesis; UDP-4-deoxy-4-formamido-beta-L-arabinose from UDP-alpha-D-glucuronate: step 1/3. The protein operates within nucleotide-sugar biosynthesis; UDP-4-deoxy-4-formamido-beta-L-arabinose biosynthesis; UDP-4-deoxy-4-formamido-beta-L-arabinose from UDP-alpha-D-glucuronate: step 3/3. It participates in bacterial outer membrane biogenesis; lipopolysaccharide biosynthesis. Bifunctional enzyme that catalyzes the oxidative decarboxylation of UDP-glucuronic acid (UDP-GlcUA) to UDP-4-keto-arabinose (UDP-Ara4O) and the addition of a formyl group to UDP-4-amino-4-deoxy-L-arabinose (UDP-L-Ara4N) to form UDP-L-4-formamido-arabinose (UDP-L-Ara4FN). The modified arabinose is attached to lipid A and is required for resistance to polymyxin and cationic antimicrobial peptides. The polypeptide is Bifunctional polymyxin resistance protein ArnA (Salmonella newport (strain SL254)).